A 308-amino-acid chain; its full sequence is MTDNKSQKVITLMGPTASGKTALAIELVKQYNCEIISVDSALIYKEMDIGTAKPDAAEQAAAPHRLIDIIDPAKSYSAADFRRDALAQIEDILSRGKTPLLVGGTMMYFKALLEGLSPLPAADEVVRAQIACEAQEFGWQALHDQLREIDPVSAERIHPNDPQRLARALEVYRISGQSLTELTKTKSEAFPYEAVQFAIAPSDRKVLHRAIETRFKTMLTLGFTAEVERLKARGDLDLDLPSMRCVGYRQCWQYLDGEIDYETMVEKAIVATRQLAKRQLTWLRGWPDLIWLESGAEDNLATVMRHSR.

14–21 is an ATP binding site; that stretch reads GPTASGKT. 16-21 contributes to the substrate binding site; sequence TASGKT. Interaction with substrate tRNA regions lie at residues 39-42, 163-167, and 244-249; these read DSAL, QRLAR, and RCVGYR.

It belongs to the IPP transferase family. In terms of assembly, monomer. The cofactor is Mg(2+).

The catalysed reaction is adenosine(37) in tRNA + dimethylallyl diphosphate = N(6)-dimethylallyladenosine(37) in tRNA + diphosphate. In terms of biological role, catalyzes the transfer of a dimethylallyl group onto the adenine at position 37 in tRNAs that read codons beginning with uridine, leading to the formation of N6-(dimethylallyl)adenosine (i(6)A). The chain is tRNA dimethylallyltransferase from Shewanella halifaxensis (strain HAW-EB4).